The sequence spans 705 residues: Polyribonucleotide nucleotidyltransferase (705 aa).

The Mg(2+) site is built by D486 and D492. One can recognise a KH domain in the interval 553–612; it reads PRIIKFKINPEKIRDVIGKGGAVIRALTEETGTTIDISDDGSVTIASISNEGGEQAKRRI. Residues 622-690 form the S1 motif domain; that stretch reads GKIYEGTVLK…DKGRLRLSMK (69 aa).

The protein belongs to the polyribonucleotide nucleotidyltransferase family. It depends on Mg(2+) as a cofactor.

The protein localises to the cytoplasm. The enzyme catalyses RNA(n+1) + phosphate = RNA(n) + a ribonucleoside 5'-diphosphate. Its function is as follows. Involved in mRNA degradation. Catalyzes the phosphorolysis of single-stranded polyribonucleotides processively in the 3'- to 5'-direction. This is Polyribonucleotide nucleotidyltransferase from Nitrosomonas eutropha (strain DSM 101675 / C91 / Nm57).